Reading from the N-terminus, the 409-residue chain is Serine/threonine transporter SstT (409 aa).

Transmembrane regions (helical) follow at residues 14–34 (GSLV…ATLS), 48–68 (FVGA…AASI), 82–102 (IVIL…LMSF), 141–161 (ALMT…GLAL), 192–212 (IGIF…AIAG), 216–236 (LLLV…PAIV), 290–310 (IPLG…ILTL), 322–342 (ILTA…ASGV), and 357–377 (FGIS…IGVI).

The protein belongs to the dicarboxylate/amino acid:cation symporter (DAACS) (TC 2.A.23) family.

It localises to the cell inner membrane. It carries out the reaction L-serine(in) + Na(+)(in) = L-serine(out) + Na(+)(out). The enzyme catalyses L-threonine(in) + Na(+)(in) = L-threonine(out) + Na(+)(out). Involved in the import of serine and threonine into the cell, with the concomitant import of sodium (symport system). In Shewanella woodyi (strain ATCC 51908 / MS32), this protein is Serine/threonine transporter SstT.